A 69-amino-acid polypeptide reads, in one-letter code: Putative membrane protein insertion efficiency factor (69 aa).

The protein belongs to the UPF0161 family.

It localises to the cell inner membrane. In terms of biological role, could be involved in insertion of integral membrane proteins into the membrane. In Geobacter sulfurreducens (strain ATCC 51573 / DSM 12127 / PCA), this protein is Putative membrane protein insertion efficiency factor.